A 263-amino-acid chain; its full sequence is 5'-nucleotidase SurE (263 aa).

A divalent metal cation is bound by residues Asp8, Asp9, Ser40, and Asn98.

Belongs to the SurE nucleotidase family. A divalent metal cation is required as a cofactor.

It is found in the cytoplasm. It catalyses the reaction a ribonucleoside 5'-phosphate + H2O = a ribonucleoside + phosphate. In terms of biological role, nucleotidase that shows phosphatase activity on nucleoside 5'-monophosphates. The chain is 5'-nucleotidase SurE from Gloeobacter violaceus (strain ATCC 29082 / PCC 7421).